Reading from the N-terminus, the 115-residue chain is Ribonuclease P protein component (115 aa).

This sequence belongs to the RnpA family. In terms of assembly, consists of a catalytic RNA component (M1 or rnpB) and a protein subunit.

It carries out the reaction Endonucleolytic cleavage of RNA, removing 5'-extranucleotides from tRNA precursor.. Functionally, RNaseP catalyzes the removal of the 5'-leader sequence from pre-tRNA to produce the mature 5'-terminus. It can also cleave other RNA substrates such as 4.5S RNA. The protein component plays an auxiliary but essential role in vivo by binding to the 5'-leader sequence and broadening the substrate specificity of the ribozyme. The polypeptide is Ribonuclease P protein component (Natranaerobius thermophilus (strain ATCC BAA-1301 / DSM 18059 / JW/NM-WN-LF)).